Here is a 417-residue protein sequence, read N- to C-terminus: UDP-N-acetylglucosamine 1-carboxyvinyltransferase (417 aa).

22–23 (KN) serves as a coordination point for phosphoenolpyruvate. Position 91 (R91) interacts with UDP-N-acetyl-alpha-D-glucosamine. The active-site Proton donor is the C115. C115 bears the 2-(S-cysteinyl)pyruvic acid O-phosphothioketal mark. UDP-N-acetyl-alpha-D-glucosamine-binding positions include 120-124 (RPVDL), D304, and I326.

This sequence belongs to the EPSP synthase family. MurA subfamily.

It localises to the cytoplasm. It carries out the reaction phosphoenolpyruvate + UDP-N-acetyl-alpha-D-glucosamine = UDP-N-acetyl-3-O-(1-carboxyvinyl)-alpha-D-glucosamine + phosphate. Its pathway is cell wall biogenesis; peptidoglycan biosynthesis. Cell wall formation. Adds enolpyruvyl to UDP-N-acetylglucosamine. This is UDP-N-acetylglucosamine 1-carboxyvinyltransferase from Nitratidesulfovibrio vulgaris (strain DP4) (Desulfovibrio vulgaris).